Reading from the N-terminus, the 490-residue chain is Cytochrome P450 2C13, male-specific (490 aa).

Cys-435 contributes to the heme binding site.

The protein belongs to the cytochrome P450 family. Heme serves as cofactor. As to expression, liver, and to a lesser extent in prostate, kidney, heart and brain.

It localises to the endoplasmic reticulum membrane. It is found in the microsome membrane. It carries out the reaction an organic molecule + reduced [NADPH--hemoprotein reductase] + O2 = an alcohol + oxidized [NADPH--hemoprotein reductase] + H2O + H(+). Its function is as follows. Cytochromes P450 are a group of heme-thiolate monooxygenases. In liver microsomes, this enzyme is involved in an NADPH-dependent electron transport pathway. It oxidizes a variety of structurally unrelated compounds, including steroids, fatty acids, and xenobiotics. The protein is Cytochrome P450 2C13, male-specific (Cyp2c13) of Rattus norvegicus (Rat).